A 368-amino-acid polypeptide reads, in one-letter code: Glutaminyl-peptide cyclotransferase (368 aa).

An N-terminal signal peptide occupies residues 1-33 (MARERRDSKAATFFCLAWALCLALPGFPQHVSG). Asn-53 carries N-linked (GlcNAc...) asparagine glycosylation. A disulfide bridge connects residues Cys-143 and Cys-169. Asp-164 contacts Zn(2+). The Proton acceptor role is filled by Glu-207. Glu-208 contacts Zn(2+). Residue Asp-254 is the Proton acceptor of the active site. An N-linked (GlcNAc...) asparagine glycan is attached at Asn-292. His-336 provides a ligand contact to Zn(2+). N-linked (GlcNAc...) asparagine glycosylation is present at Asn-352.

It belongs to the glutaminyl-peptide cyclotransferase family. Expressed by the venom gland.

The protein resides in the secreted. The catalysed reaction is N-terminal L-glutaminyl-[peptide] = N-terminal 5-oxo-L-prolyl-[peptide] + NH4(+). Its function is as follows. Responsible for the biosynthesis of pyroglutamyl peptides. Has a bias against acidic and tryptophan residues adjacent to the N-terminal glutaminyl residue and a lack of importance of chain length after the second residue. Also catalyzes N-terminal pyroglutamate formation. The polypeptide is Glutaminyl-peptide cyclotransferase (QPCT) (Gloydius blomhoffii (Mamushi)).